The chain runs to 29 residues: Cytochrome c oxidase subunit 7A1, mitochondrial (29 aa).

The span at 1–13 (LENRVAEKQKLFQ) shows a compositional bias: basic and acidic residues. The segment at 1-29 (LENRVAEKQKLFQEDNGLPVHLKGGATDN) is disordered.

The protein belongs to the cytochrome c oxidase VIIa family. In terms of assembly, component of the complex IV (CIV, cytochrome c oxidase), a multisubunit enzyme composed of 14 subunits. The complex is composed of a catalytic core of 3 subunits MT-CO1, MT-CO2 and MT-CO3, encoded in the mitochondrial DNA, and 11 supernumerary subunits COX4I1 (or COX4I2), COX5A, COX5B, COX6A2 (or COX6A1), COX6B1 (or COX6B2), COX6C, COX7A1 (or COX7A2), COX7B, COX7C, COX8B and NDUFA4, which are encoded in the nuclear genome. The complex exists as a monomer or a dimer and forms supercomplexes (SCs) in the inner mitochondrial membrane with NADH-ubiquinone oxidoreductase (complex I, CI) and ubiquinol-cytochrome c oxidoreductase (cytochrome b-c1 complex, complex III, CIII), resulting in different assemblies (supercomplex SCI(1)III(2)IV(1) and megacomplex MCI(2)III(2)IV(2)).

The protein resides in the mitochondrion inner membrane. Its pathway is energy metabolism; oxidative phosphorylation. Component of the mitochondrial respiratory complex IV (CIV, also named cytochrome c oxidase complex), the last enzyme in the mitochondrial electron transport chain which drives oxidative phosphorylation. The CIV complex is the component of the respiratory chain that catalyzes the reduction of oxygen to water. Acts as an assembly factor that specifically drives the homodimerization of CIV complexes, mediating the formation of mitochondrial respiratory supercomplexes (respirasomes) containing two CIV: supercomplxes with two molecules of CIV show improved activity. Despite being highly expressed in brown adipose tissue, not required for thermogenesis. The polypeptide is Cytochrome c oxidase subunit 7A1, mitochondrial (COX7A1) (Ovis aries (Sheep)).